Reading from the N-terminus, the 219-residue chain is 2-hydroxy-3-keto-5-methylthiopentenyl-1-phosphate phosphatase (219 aa).

It belongs to the HAD-like hydrolase superfamily. MtnX family.

It catalyses the reaction 2-hydroxy-5-methylsulfanyl-3-oxopent-1-enyl phosphate + H2O = 1,2-dihydroxy-5-(methylsulfanyl)pent-1-en-3-one + phosphate. The protein operates within amino-acid biosynthesis; L-methionine biosynthesis via salvage pathway; L-methionine from S-methyl-5-thio-alpha-D-ribose 1-phosphate: step 4/6. Dephosphorylates 2-hydroxy-3-keto-5-methylthiopentenyl-1-phosphate (HK-MTPenyl-1-P) yielding 1,2-dihydroxy-3-keto-5-methylthiopentene (DHK-MTPene). This chain is 2-hydroxy-3-keto-5-methylthiopentenyl-1-phosphate phosphatase, found in Bacillus cereus (strain ZK / E33L).